The following is a 506-amino-acid chain: H/ACA ribonucleoprotein complex subunit DKC1 (506 aa).

The disordered stretch occupies residues 1–26 (MADTESKKEKKRKSKKISDEEVGDIQ). Asp-120 (nucleophile) is an active-site residue. Positions 291–366 (HKRIVMKDSA…VVAKIKRVIM (76 aa)) constitute a PUA domain. Disordered regions lie at residues 391–410 (GLLD…WKEG) and 419–506 (VKKG…ADSD). A compositionally biased stretch (basic and acidic residues) spans 421–434 (KGGEASAKRKRDES). The segment covering 457–466 (EKKKKKKEKK) has biased composition (basic residues).

It belongs to the pseudouridine synthase TruB family. Part of the H/ACA small nucleolar ribonucleoprotein (H/ACA snoRNP) complex. The complex binds a box H/ACA small nucleolar RNA (snoRNA), which may target the specific site of modification within the RNA substrate.

Its subcellular location is the nucleus. The protein localises to the nucleolus. It localises to the cajal body. It catalyses the reaction uridine in 5S rRNA = pseudouridine in 5S rRNA. Functionally, catalytic subunit of H/ACA small nucleolar ribonucleoprotein (H/ACA snoRNP) complex, which catalyzes pseudouridylation of rRNA. This involves the isomerization of uridine such that the ribose is subsequently attached to C5, instead of the normal N1. Pseudouridine ('psi') residues may serve to stabilize the conformation of rRNAs. Required for ribosome biogenesis and telomere maintenance. This is H/ACA ribonucleoprotein complex subunit DKC1 from Danio rerio (Zebrafish).